The chain runs to 255 residues: Phosphate import ATP-binding protein PstB (255 aa).

The 243-residue stretch at 8 to 250 (IKSSNLNVHY…PGNKMTQDYI (243 aa)) folds into the ABC transporter domain. 40–47 (GPSGCGKS) lines the ATP pocket.

Belongs to the ABC transporter superfamily. Phosphate importer (TC 3.A.1.7) family. In terms of assembly, the complex is composed of two ATP-binding proteins (PstB), two transmembrane proteins (PstC and PstA) and a solute-binding protein (PstS).

It localises to the cell inner membrane. The catalysed reaction is phosphate(out) + ATP + H2O = ADP + 2 phosphate(in) + H(+). Functionally, part of the ABC transporter complex PstSACB involved in phosphate import. Responsible for energy coupling to the transport system. This Pelagibacter ubique (strain HTCC1062) protein is Phosphate import ATP-binding protein PstB.